Reading from the N-terminus, the 506-residue chain is tRNA-2-methylthio-N(6)-dimethylallyladenosine synthase (506 aa).

Residues 14-132 (KSYEVRTYGC…LPVLLERARV (119 aa)) enclose the MTTase N-terminal domain. [4Fe-4S] cluster-binding residues include Cys-23, Cys-61, Cys-95, Cys-169, Cys-173, and Cys-176. The Radical SAM core domain maps to 155 to 386 (RESAYAAWVS…ALQEQISWDE (232 aa)). Residues 388 to 456 (KKQVGRTLDV…PHHLLAEGTP (69 aa)) enclose the TRAM domain.

This sequence belongs to the methylthiotransferase family. MiaB subfamily. As to quaternary structure, monomer. Requires [4Fe-4S] cluster as cofactor.

Its subcellular location is the cytoplasm. It catalyses the reaction N(6)-dimethylallyladenosine(37) in tRNA + (sulfur carrier)-SH + AH2 + 2 S-adenosyl-L-methionine = 2-methylsulfanyl-N(6)-dimethylallyladenosine(37) in tRNA + (sulfur carrier)-H + 5'-deoxyadenosine + L-methionine + A + S-adenosyl-L-homocysteine + 2 H(+). Catalyzes the methylthiolation of N6-(dimethylallyl)adenosine (i(6)A), leading to the formation of 2-methylthio-N6-(dimethylallyl)adenosine (ms(2)i(6)A) at position 37 in tRNAs that read codons beginning with uridine. This is tRNA-2-methylthio-N(6)-dimethylallyladenosine synthase from Streptomyces griseus subsp. griseus (strain JCM 4626 / CBS 651.72 / NBRC 13350 / KCC S-0626 / ISP 5235).